We begin with the raw amino-acid sequence, 555 residues long: Urocanate hydratase (555 aa).

Residues 52–53, Q130, 176–178, E196, R201, 242–243, 263–267, 273–274, and Y322 each bind NAD(+); these read GG, GMG, NA, QTSAH, and YL. C410 is an active-site residue. G492 lines the NAD(+) pocket.

This sequence belongs to the urocanase family. NAD(+) serves as cofactor.

It is found in the cytoplasm. It catalyses the reaction 4-imidazolone-5-propanoate = trans-urocanate + H2O. It participates in amino-acid degradation; L-histidine degradation into L-glutamate; N-formimidoyl-L-glutamate from L-histidine: step 2/3. Functionally, catalyzes the conversion of urocanate to 4-imidazolone-5-propionate. In Shewanella baltica (strain OS155 / ATCC BAA-1091), this protein is Urocanate hydratase.